Consider the following 131-residue polypeptide: Small ribosomal subunit protein uS8 (131 aa).

Belongs to the universal ribosomal protein uS8 family. In terms of assembly, part of the 30S ribosomal subunit. Contacts proteins S5 and S12.

One of the primary rRNA binding proteins, it binds directly to 16S rRNA central domain where it helps coordinate assembly of the platform of the 30S subunit. The sequence is that of Small ribosomal subunit protein uS8 from Prosthecochloris aestuarii (strain DSM 271 / SK 413).